Here is a 360-residue protein sequence, read N- to C-terminus: Ethanolamine-phosphate cytidylyltransferase (360 aa).

CTP contacts are provided by residues 207–208 (GF), 215–218 (HTEA), Lys-243, 291–294 (HGDD), and 321–325 (HTEGL).

It belongs to the cytidylyltransferase family.

It catalyses the reaction phosphoethanolamine + CTP + H(+) = CDP-ethanolamine + diphosphate. It participates in phospholipid metabolism; phosphatidylethanolamine biosynthesis; phosphatidylethanolamine from ethanolamine: step 2/3. Functionally, ethanolamine-phosphate cytidylyltransferase that catalyzes the second step in the synthesis of phosphatidylethanolamine (PE) from ethanolamine via the CDP-ethanolamine pathway. The chain is Ethanolamine-phosphate cytidylyltransferase (pctA) from Dictyostelium discoideum (Social amoeba).